We begin with the raw amino-acid sequence, 525 residues long: MSFNIKEISEMIEKQIRNYNKEVVQTEQGTVVSVGDGIALIYGLDNAIMGELLLFSNNVYGMVLNLEEGAVGSVILGDETLIREGDIVKRTNKVVETPVGDALLGRVIDALGQPIDNLGPIDFTKTRPVERVATSVMARKSVSQPLETGILAIDSAIPIGKGQRELIIGDRQTGKTAIAIDAIINQKNRNVKCIYVAIGQKDSTIVQVVEKFKKYGAMDYTVVVNAGASQPASLQYLSPYTGITIAEEWMESGNDVLIVYDDLTKHAVSYREMSLLLRRPPGREAYPGDVFYLHSRLLERAARVNENYGGGSITALPIIETQAGDISAYIPTNVISITDGQIFLSSELFNQGVRPAVDIGPSVSRVGSAAQIKSIKQVSGTLKLELAQYYELESFAKFGSDLDETTKATLDQGAKIIQMLIQKQFNPLEQVDQAILLLTIKSHLLKWLPLDSIYNFKHEILSHFKNDQQAAKLRKKLDEQKTFDDQLQKEILKQAQKVVLKITKNIKEYKPEAFGNITEYQNLGK.

Position 169-176 (169-176 (GDRQTGKT)) interacts with ATP.

It belongs to the ATPase alpha/beta chains family. In terms of assembly, F-type ATPases have 2 components, CF(1) - the catalytic core - and CF(0) - the membrane proton channel. CF(1) has five subunits: alpha(3), beta(3), gamma(1), delta(1), epsilon(1). CF(0) has three main subunits: a(1), b(2) and c(9-12). The alpha and beta chains form an alternating ring which encloses part of the gamma chain. CF(1) is attached to CF(0) by a central stalk formed by the gamma and epsilon chains, while a peripheral stalk is formed by the delta and b chains.

It is found in the cell membrane. It carries out the reaction ATP + H2O + 4 H(+)(in) = ADP + phosphate + 5 H(+)(out). Its function is as follows. Produces ATP from ADP in the presence of a proton gradient across the membrane. The alpha chain is a regulatory subunit. This Mycoplasma capricolum subsp. capricolum (strain California kid / ATCC 27343 / NCTC 10154) protein is ATP synthase subunit alpha.